We begin with the raw amino-acid sequence, 617 residues long: tRNA 5-methylaminomethyl-2-thiouridine biosynthesis bifunctional protein MnmC (617 aa).

The segment at 1–226 (MLDWQNGQLY…KREMLQGDLP (226 aa)) is tRNA (mnm(5)s(2)U34)-methyltransferase. The FAD-dependent cmnm(5)s(2)U34 oxidoreductase stretch occupies residues 241 to 617 (IGGGIAGCAA…SPAIPVSIKG (377 aa)).

This sequence in the N-terminal section; belongs to the methyltransferase superfamily. tRNA (mnm(5)s(2)U34)-methyltransferase family. The protein in the C-terminal section; belongs to the DAO family. Requires FAD as cofactor.

It is found in the cytoplasm. It catalyses the reaction 5-aminomethyl-2-thiouridine(34) in tRNA + S-adenosyl-L-methionine = 5-methylaminomethyl-2-thiouridine(34) in tRNA + S-adenosyl-L-homocysteine + H(+). Catalyzes the last two steps in the biosynthesis of 5-methylaminomethyl-2-thiouridine (mnm(5)s(2)U) at the wobble position (U34) in tRNA. Catalyzes the FAD-dependent demodification of cmnm(5)s(2)U34 to nm(5)s(2)U34, followed by the transfer of a methyl group from S-adenosyl-L-methionine to nm(5)s(2)U34, to form mnm(5)s(2)U34. This is tRNA 5-methylaminomethyl-2-thiouridine biosynthesis bifunctional protein MnmC from Nitrosospira multiformis (strain ATCC 25196 / NCIMB 11849 / C 71).